The chain runs to 412 residues: Esterase EstD (412 aa).

The N-terminal stretch at 1-20 (MRLTVFLSLFLGVMVFGAFD) is a signal peptide. Ser243 functions as the Nucleophile in the catalytic mechanism. Residues Asp347 and His378 each act as charge relay system in the active site.

It belongs to the AB hydrolase superfamily. Esterase 10 family. Exists mainly as a monomer and, to some extent as a dimer.

The enzyme catalyses a carboxylic ester + H2O = an alcohol + a carboxylate + H(+). Its activity is regulated as follows. Is strongly inhibited by phenylmethylsulfonyl fluoride, a serine protease inhibitor, and by mercury chloride. Diethyl pyrocarbonate, a histidine modifier, also inhibits the reaction, albeit less pronounced than phenylmethylsulfonyl fluoride. EDTA and dithiothreitol have no effect on enzyme activity. Functionally, exhibits significant esterase activity with a preference for short acyl chain esters (C4-C8) in vitro. Its physiological function is not known. Displays neither proteolytic activity using casein as substrate, nor peptidase activity when assayed with L-leucine p-nitroanilide and L-proline p-nitroanilide. The chain is Esterase EstD from Thermotoga maritima (strain ATCC 43589 / DSM 3109 / JCM 10099 / NBRC 100826 / MSB8).